The sequence spans 49 residues: Chitin-binding lectin (49 aa).

Residues aspartate 2 to cysteine 45 form the Chitin-binding type-1 domain. Disulfide bonds link cysteine 5–cysteine 22, cysteine 16–cysteine 28, cysteine 21–cysteine 35, and cysteine 39–cysteine 43.

In terms of assembly, homodimer; disulfide-linked.

In terms of biological role, chitin-binding lectin which is specific for N-acetylglucosamine oligomers. This Viscum album (European mistletoe) protein is Chitin-binding lectin.